A 541-amino-acid polypeptide reads, in one-letter code: Molybdate transporter 1 (541 aa).

The next 5 membrane-spanning stretches (helical) occupy residues 24–44 (LLLSEISGSLGDLGTLLPLLL), 58–78 (LLFSGLFNILTGLVFGVPLPV), 98–118 (TVAAGAWVGFAVLLLGGTGGL), 137–157 (AGMSLVVAAGGGMVRPLGWLW), and 168–188 (GLGEWLDSRALAVLAFGGLVV). The disordered stretch occupies residues 193–213 (QQQQQQQSGEKPQERRKKRSK). The next 2 membrane-spanning stretches (helical) occupy residues 214-234 (MPVQVPYALVLFLVGIMFAVV) and 287-307 (MAIAQLPLTTLNSIIAASALA). Residues 317 to 366 (PQLYADDESSDSPLSPSPSASSSSLSSAPPQTPSAETPKPLSSPTSAEEG) form a disordered region. The segment covering 327-351 (DSPLSPSPSASSSSLSSAPPQTPSA) has biased composition (low complexity). The next 2 helical transmembrane spans lie at 413–433 (IILLGLTKFLLGLFFPGPGLL) and 435–455 (LLGKFPKAFLGVMVLGAGVEL). Positions 510–541 (TEKGRGGEQGLLGEEEEEEEQGRVDEESPLLR) are disordered.

It belongs to the SLC26A/SulP transporter (TC 2.A.53) family.

The protein localises to the vacuole membrane. In terms of biological role, exports stored molybdate from the vacuole into the cytosol, making it available for molybdate cofactor (Moco) biosynthesis. Plays a role in molybdate homeostasis as high cytosolic levels of molybdate are toxic to cells. Not required for molybdate import into cells. The sequence is that of Molybdate transporter 1 from Neurospora crassa (strain ATCC 24698 / 74-OR23-1A / CBS 708.71 / DSM 1257 / FGSC 987).